Consider the following 338-residue polypeptide: DNA-directed RNA polymerase subunit alpha (338 aa).

Residues 1-233 (MLREEVAVST…DLFIPFLHAE (233 aa)) form an alpha N-terminal domain (alpha-NTD) region. Residues 266-338 (IALKFIFIDQ…IDLPKNKFSN (73 aa)) form an alpha C-terminal domain (alpha-CTD) region.

It belongs to the RNA polymerase alpha chain family. As to quaternary structure, in plastids the minimal PEP RNA polymerase catalytic core is composed of four subunits: alpha, beta, beta', and beta''. When a (nuclear-encoded) sigma factor is associated with the core the holoenzyme is formed, which can initiate transcription.

Its subcellular location is the plastid. It is found in the chloroplast. The enzyme catalyses RNA(n) + a ribonucleoside 5'-triphosphate = RNA(n+1) + diphosphate. Its function is as follows. DNA-dependent RNA polymerase catalyzes the transcription of DNA into RNA using the four ribonucleoside triphosphates as substrates. This chain is DNA-directed RNA polymerase subunit alpha, found in Nandina domestica (Heavenly bamboo).